The sequence spans 847 residues: Protein translocase subunit SecA (847 aa).

ATP-binding positions include glutamine 87, 105-109 (GEGKT), and aspartate 495. The disordered stretch occupies residues 828-847 (SSNSPSDARNRPIEHDDNAV). A compositionally biased stretch (basic and acidic residues) spans 835–847 (ARNRPIEHDDNAV).

It belongs to the SecA family. Monomer and homodimer. Part of the essential Sec protein translocation apparatus which comprises SecA, SecYEG and auxiliary proteins SecDF. Other proteins may also be involved.

It localises to the cell membrane. The protein localises to the cytoplasm. The catalysed reaction is ATP + H2O + cellular proteinSide 1 = ADP + phosphate + cellular proteinSide 2.. Its function is as follows. Part of the Sec protein translocase complex. Interacts with the SecYEG preprotein conducting channel. Has a central role in coupling the hydrolysis of ATP to the transfer of proteins into and across the cell membrane, serving as an ATP-driven molecular motor driving the stepwise translocation of polypeptide chains across the membrane. In Tropheryma whipplei (strain TW08/27) (Whipple's bacillus), this protein is Protein translocase subunit SecA.